The primary structure comprises 668 residues: Probable potassium transport system protein Kup (668 aa).

A run of 12 helical transmembrane segments spans residues 17–37, 59–79, 104–124, 148–168, 175–195, 221–241, 256–276, 299–319, 350–370, 380–400, 403–423, and 430–450; these read GILV…LYVM, VSLI…VIAL, IIPA…TPAV, TIIV…QRFG, AFGP…LMNF, LGLF…ALYS, PYIK…LLTV, ILVF…QALI, MYIP…VLAF, YGLS…FYLL, IPAW…VVFF, and FFHG…IMII.

It belongs to the HAK/KUP transporter (TC 2.A.72) family.

The protein localises to the cell membrane. It catalyses the reaction K(+)(in) + H(+)(in) = K(+)(out) + H(+)(out). In terms of biological role, transport of potassium into the cell. Likely operates as a K(+):H(+) symporter. The sequence is that of Probable potassium transport system protein Kup from Enterococcus faecalis (strain ATCC 700802 / V583).